The primary structure comprises 118 residues: Fluoride-specific ion channel FluC 1 (118 aa).

The next 2 membrane-spanning stretches (helical) occupy residues 1–21 (MIQC…RGFV) and 29–49 (FNTS…FCIG). Residues Gly71 and Thr74 each coordinate Na(+). A helical membrane pass occupies residues 95–115 (LFILYSILQYGVSFVACLLGY).

The protein belongs to the fluoride channel Fluc/FEX (TC 1.A.43) family.

The protein localises to the cell membrane. The catalysed reaction is fluoride(in) = fluoride(out). Its activity is regulated as follows. Na(+) is not transported, but it plays an essential structural role and its presence is essential for fluoride channel function. Fluoride-specific ion channel. Important for reducing fluoride concentration in the cell, thus reducing its toxicity. This chain is Fluoride-specific ion channel FluC 1, found in Staphylococcus saprophyticus subsp. saprophyticus (strain ATCC 15305 / DSM 20229 / NCIMB 8711 / NCTC 7292 / S-41).